The primary structure comprises 168 residues: MNSKGQYPTQPTYPVQPPGNPVYPQTLHLPQAPPYTDAPPAYSELYRPSFVHPGAATVPTMSAAFPGASLYLPMAQSVAVGPLGSTIPMAYYPVGPIYPPGSAVLVEGGYDAGARFGAGATTGSIPPPPPGCPPNAAQLAVMQGANVLVTQRKGNFFMGGSDGGYTIW.

Residues 1–13 (MNSKGQYPTQPTY) are compositionally biased toward low complexity. The segment at 1 to 25 (MNSKGQYPTQPTYPVQPPGNPVYPQ) is disordered. Positions 39 to 42 (PPAY) match the PPAY motif. The residue at position 77 (serine 77) is a Phosphoserine.

In terms of assembly, interacts with SOX6. Interacts with DAZ1 and DAZL. Interacts with IL17RB. May interact with FAM168B. Interacts with INCA1. Interacts with EIF4G1 and EIF4G2. Interacts (via PPAY motif) with NEDD4 (via WW domains). Interacts with transcription factor TCF4; the interaction results in localization of DAZAP2 to the nucleus. Interacts with transcription factors TCF7 and TCF7L1. Interacts with transcription factor LEF1. Interacts with serine/threonine-protein kinase HIPK2; the interaction results in phosphorylation of DAZAP2 which causes localization of DAZAP2 to the nucleus, reduces interaction of DAZAP2 with HIPK2 and prevents DAZAP2-dependent degradation of HIPK2. Interacts with ubiquitin ligase SIAH1; the interaction is decreased following phosphorylation of DAZAP2 by HIPK2. Interacts with TP53; the interaction is triggered by DNA damage. Ubiquitinated by SMURF2, leading to proteasomal degradation. Ubiquitinated by NEDD4, leading to proteasomal degradation. Post-translationally, following DNA damage, phosphorylated by HIPK2 which promotes DAZAP2 localization to the nucleus, reduces interaction of DAZAP2 with HIPK2 and SIAH1, and prevents DAZAP2-dependent ubiquitination of HIPK2 by E3 ubiquitin-protein ligase SIAH1 and subsequent HIPK2 proteasomal degradation.

The protein localises to the cytoplasm. It localises to the nucleus. The protein resides in the nucleus speckle. Its subcellular location is the nuclear body. It is found in the stress granule. In unstressed cells, promotes SIAH1-mediated polyubiquitination and degradation of the serine/threonine-protein kinase HIPK2, probably by acting as a loading factor that potentiates complex formation between HIPK2 and ubiquitin ligase SIAH1. In response to DNA damage, localizes to the nucleus following phosphorylation by HIPK2 and modulates the expression of a subset of TP53/p53 target genes by binding to TP53 at target gene promoters. This limits the expression of a number of cell death-mediating TP53 target genes, reducing DNA damage-induced cell death. Enhances the binding of transcription factor TCF7L2/TCF4, a Wnt signaling pathway effector, to the promoters of target genes. Plays a role in stress granule formation. The sequence is that of DAZ-associated protein 2 from Rattus norvegicus (Rat).